Here is a 513-residue protein sequence, read N- to C-terminus: ATP synthase subunit alpha (513 aa).

Residue 169–176 (GDRQTGKT) coordinates ATP.

This sequence belongs to the ATPase alpha/beta chains family. F-type ATPases have 2 components, CF(1) - the catalytic core - and CF(0) - the membrane proton channel. CF(1) has five subunits: alpha(3), beta(3), gamma(1), delta(1), epsilon(1). CF(0) has three main subunits: a(1), b(2) and c(9-12). The alpha and beta chains form an alternating ring which encloses part of the gamma chain. CF(1) is attached to CF(0) by a central stalk formed by the gamma and epsilon chains, while a peripheral stalk is formed by the delta and b chains.

It is found in the cell inner membrane. It carries out the reaction ATP + H2O + 4 H(+)(in) = ADP + phosphate + 5 H(+)(out). Its function is as follows. Produces ATP from ADP in the presence of a proton gradient across the membrane. The alpha chain is a regulatory subunit. In Bordetella petrii (strain ATCC BAA-461 / DSM 12804 / CCUG 43448), this protein is ATP synthase subunit alpha.